We begin with the raw amino-acid sequence, 423 residues long: Diaminobutyrate--2-oxoglutarate transaminase (423 aa).

Position 271 is an N6-(pyridoxal phosphate)lysine (Lys271).

This sequence belongs to the class-III pyridoxal-phosphate-dependent aminotransferase family. Pyridoxal 5'-phosphate serves as cofactor.

The enzyme catalyses L-2,4-diaminobutanoate + 2-oxoglutarate = L-aspartate 4-semialdehyde + L-glutamate. The protein operates within amine and polyamine biosynthesis; ectoine biosynthesis; L-ectoine from L-aspartate 4-semialdehyde: step 1/3. In terms of biological role, catalyzes reversively the conversion of L-aspartate beta-semialdehyde (ASA) to L-2,4-diaminobutyrate (DABA) by transamination with L-glutamate. This chain is Diaminobutyrate--2-oxoglutarate transaminase (ectB), found in Streptomyces avermitilis (strain ATCC 31267 / DSM 46492 / JCM 5070 / NBRC 14893 / NCIMB 12804 / NRRL 8165 / MA-4680).